We begin with the raw amino-acid sequence, 278 residues long: Shikimate dehydrogenase (NADP(+)) (278 aa).

Shikimate contacts are provided by residues 23–25 and Thr-70; that span reads SRS. Lys-74 serves as the catalytic Proton acceptor. Glu-86 is an NADP(+) binding site. Positions 95 and 110 each coordinate shikimate. NADP(+) contacts are provided by residues 135-139, 159-164, and Met-224; these read GAGGA and NRTKEK. Shikimate is bound at residue Tyr-226. NADP(+) is bound at residue Gly-248.

This sequence belongs to the shikimate dehydrogenase family. In terms of assembly, homodimer.

The enzyme catalyses shikimate + NADP(+) = 3-dehydroshikimate + NADPH + H(+). It functions in the pathway metabolic intermediate biosynthesis; chorismate biosynthesis; chorismate from D-erythrose 4-phosphate and phosphoenolpyruvate: step 4/7. In terms of biological role, involved in the biosynthesis of the chorismate, which leads to the biosynthesis of aromatic amino acids. Catalyzes the reversible NADPH linked reduction of 3-dehydroshikimate (DHSA) to yield shikimate (SA). The polypeptide is Shikimate dehydrogenase (NADP(+)) (Alcanivorax borkumensis (strain ATCC 700651 / DSM 11573 / NCIMB 13689 / SK2)).